Consider the following 930-residue polypeptide: 26S proteasome regulatory subunit RPN2 (930 aa).

10 PC repeats span residues 358–391, 395–428, 437–471, 472–506, 508–541, 542–577, 578–610, 612–646, 647–684, and 690–722; these read TATASLGIIHQGNLTGGKKIMEPYLPGSRASSRY, GSLYGLGLIYAGYGKEIIGYLKDQIVENSSNATD, GASLGIGLAGMSSNSTEIFEALKEVLYADSANSGA, AAALGIGLTMLGSGDETVAENLYTYAQETSHGEIT, GLAIALALLNYGREELADETIKKMLEHENDSMRY, GAVYTIALAYAGTSSNEAVKKLLHVAVSDSNDDVRR, ASVTALGFVLIRDYTTVPRIVELLSESHNPHVR, GTAFALGVACAGRGLQAAIDVLEPLTNDPVDFVRQ, AAMIALSMILIQQTEKTNVKVRDVNEQLRNVIANKHQE, and GACVAQGIINAGGRNVTIQLENSEMGTLNTKSV. Disordered stretches follow at residues 806-840 and 911-930; these read AKKSKKDKAVEPDKSKEEIKVENEQRDKKEHDADV and EKETDAPLPAPFKVQDDLEF. Over residues 812–840 the composition is skewed to basic and acidic residues; it reads DKAVEPDKSKEEIKVENEQRDKKEHDADV.

Belongs to the proteasome subunit S1 family.

Acts as a regulatory subunit of the 26S proteasome which is involved in the ATP-dependent degradation of ubiquitinated proteins. This Eremothecium gossypii (strain ATCC 10895 / CBS 109.51 / FGSC 9923 / NRRL Y-1056) (Yeast) protein is 26S proteasome regulatory subunit RPN2 (RPN2).